Reading from the N-terminus, the 476-residue chain is Glutamyl-tRNA(Gln) amidotransferase subunit A (476 aa).

Residues lysine 76 and serine 151 each act as charge relay system in the active site. Serine 175 functions as the Acyl-ester intermediate in the catalytic mechanism.

The protein belongs to the amidase family. GatA subfamily. In terms of assembly, heterotrimer of A, B and C subunits.

It carries out the reaction L-glutamyl-tRNA(Gln) + L-glutamine + ATP + H2O = L-glutaminyl-tRNA(Gln) + L-glutamate + ADP + phosphate + H(+). Allows the formation of correctly charged Gln-tRNA(Gln) through the transamidation of misacylated Glu-tRNA(Gln) in organisms which lack glutaminyl-tRNA synthetase. The reaction takes place in the presence of glutamine and ATP through an activated gamma-phospho-Glu-tRNA(Gln). The sequence is that of Glutamyl-tRNA(Gln) amidotransferase subunit A from Chlorobium phaeobacteroides (strain DSM 266 / SMG 266 / 2430).